Consider the following 254-residue polypeptide: Triosephosphate isomerase (254 aa).

9–11 (NWK) contributes to the substrate binding site. Catalysis depends on His96, which acts as the Electrophile. Catalysis depends on Glu169, which acts as the Proton acceptor. Substrate-binding positions include Gly175, Ser215, and 236-237 (GG).

The protein belongs to the triosephosphate isomerase family. Homodimer.

It is found in the cytoplasm. The enzyme catalyses D-glyceraldehyde 3-phosphate = dihydroxyacetone phosphate. The protein operates within carbohydrate biosynthesis; gluconeogenesis. Its pathway is carbohydrate degradation; glycolysis; D-glyceraldehyde 3-phosphate from glycerone phosphate: step 1/1. Involved in the gluconeogenesis. Catalyzes stereospecifically the conversion of dihydroxyacetone phosphate (DHAP) to D-glyceraldehyde-3-phosphate (G3P). This Borrelia recurrentis (strain A1) protein is Triosephosphate isomerase.